The primary structure comprises 135 residues: Histone H3 (135 aa).

Positions 1–40 (MARTKQTARKSTGGKAPRKAVATKARKTAPPVGGVKKPHR) are disordered. Over residues 19 to 31 (KAVATKARKTAPP) the composition is skewed to low complexity.

The protein belongs to the histone H3 family. As to quaternary structure, the nucleosome is a histone octamer containing two molecules each of H2A, H2B, H3 and H4 assembled in one H3-H4 heterotetramer and two H2A-H2B heterodimers. The octamer wraps approximately 147 bp of DNA.

Its subcellular location is the nucleus. It is found in the chromosome. Its function is as follows. Core component of nucleosome. Nucleosomes wrap and compact DNA into chromatin, limiting DNA accessibility to the cellular machineries which require DNA as a template. Histones thereby play a central role in transcription regulation, DNA repair, DNA replication and chromosomal stability. DNA accessibility is regulated via a complex set of post-translational modifications of histones, also called histone code, and nucleosome remodeling. This is Histone H3 from Mastigamoeba balamuthi (Phreatamoeba balamuthi).